We begin with the raw amino-acid sequence, 553 residues long: Protein PALS2 (553 aa).

L27 domains follow at residues 1–48 (MQQV…EDSK) and 49–107 (LEAV…YDSP). The region spanning 129–208 (ILGIHKKAGE…SVTLKILPSY (80 aa)) is the PDZ domain. The region spanning 228–297 (VRQVFVKCHF…PSQFLEEKRK (70 aa)) is the SH3 domain. In terms of domain architecture, Guanylate kinase-like spans 351–538 (RKTLVLIGAQ…AFEKLQTAIE (188 aa)). A Phosphotyrosine modification is found at Tyr513.

Belongs to the MAGUK family. In terms of assembly, interacts with CADM1. Interacts with the LIN7 proteins.

The protein localises to the membrane. The polypeptide is Protein PALS2 (Mus musculus (Mouse)).